The chain runs to 144 residues: MKLHELKPAEGSRQVRNRVGRGTSSGNGKTAGRGQKGQKARGKVRLGFEGGQMPLFRRMPKRGFKNINRKEYAIVNLETLNKFEDGAEVTPALLVESGIIKDEKDGIKVLGNGTLNKQLTVKASKFSASAKEAIESKGGKAEVI.

Over residues 1–10 (MKLHELKPAE) the composition is skewed to basic and acidic residues. The interval 1 to 52 (MKLHELKPAEGSRQVRNRVGRGTSSGNGKTAGRGQKGQKARGKVRLGFEGGQ) is disordered. Residues 23–35 (TSSGNGKTAGRGQ) show a composition bias toward gly residues.

Belongs to the universal ribosomal protein uL15 family. As to quaternary structure, part of the 50S ribosomal subunit.

Its function is as follows. Binds to the 23S rRNA. This Ligilactobacillus salivarius (strain UCC118) (Lactobacillus salivarius) protein is Large ribosomal subunit protein uL15.